We begin with the raw amino-acid sequence, 521 residues long: GMP synthase [glutamine-hydrolyzing] (521 aa).

A Glutamine amidotransferase type-1 domain is found at 5–197 (KILILDFGSQ…VLDICGAQPG (193 aa)). Residue Cys81 is the Nucleophile of the active site. Residues His171 and Glu173 contribute to the active site. The GMPS ATP-PPase domain maps to 198–390 (WTMPNYIEEA…LGLPREMVYR (193 aa)). ATP is bound at residue 225–231 (SGGVDSS).

In terms of assembly, homodimer.

It catalyses the reaction XMP + L-glutamine + ATP + H2O = GMP + L-glutamate + AMP + diphosphate + 2 H(+). The protein operates within purine metabolism; GMP biosynthesis; GMP from XMP (L-Gln route): step 1/1. Catalyzes the synthesis of GMP from XMP. The sequence is that of GMP synthase [glutamine-hydrolyzing] (guaA) from Neisseria meningitidis serogroup B (strain ATCC BAA-335 / MC58).